The following is a 70-amino-acid chain: DNA-directed RNA polymerase subunit epsilon (70 aa).

The protein belongs to the RNA polymerase subunit epsilon family. As to quaternary structure, RNAP is composed of a core of 2 alpha, a beta and a beta' subunit. The core is associated with a delta subunit, and at least one of epsilon or omega. When a sigma factor is associated with the core the holoenzyme is formed, which can initiate transcription.

It catalyses the reaction RNA(n) + a ribonucleoside 5'-triphosphate = RNA(n+1) + diphosphate. Functionally, a non-essential component of RNA polymerase (RNAP). The chain is DNA-directed RNA polymerase subunit epsilon from Latilactobacillus sakei subsp. sakei (strain 23K) (Lactobacillus sakei subsp. sakei).